Reading from the N-terminus, the 339-residue chain is MAFTLAQLAQQLGAQVHGDGTLEIRKVATLEKAGEGDITFLSNKKYRHYLEQSKATAVLITEADLPFCPTNALVLKDPYVGFARVAQLLDTTPQPATDIHPSAVIAADVQLGERVAIGANAVIESGVVLGDDVRIGPGCFVGKNTRLGARSRLWANVTLYHNITMGTDCLVQSGTVIGADGFGYANERGEWIKIPQLGGVTIGNRVEIGACTTIDRGALEDTRIADNVIIDNQCQIAHNVEIGYGTAVAGSTVMAGSLKVGKYCIIGGASVFNGHMEICDQATVTGMAMVMRPITEPGVYSSGIPLQTNKEWRKTAARVMRIEEMHKRLSKLEKKLDQE.

The Proton acceptor role is filled by His238.

Belongs to the transferase hexapeptide repeat family. LpxD subfamily. In terms of assembly, homotrimer.

The catalysed reaction is a UDP-3-O-[(3R)-3-hydroxyacyl]-alpha-D-glucosamine + a (3R)-hydroxyacyl-[ACP] = a UDP-2-N,3-O-bis[(3R)-3-hydroxyacyl]-alpha-D-glucosamine + holo-[ACP] + H(+). It functions in the pathway bacterial outer membrane biogenesis; LPS lipid A biosynthesis. Its function is as follows. Catalyzes the N-acylation of UDP-3-O-acylglucosamine using 3-hydroxyacyl-ACP as the acyl donor. Is involved in the biosynthesis of lipid A, a phosphorylated glycolipid that anchors the lipopolysaccharide to the outer membrane of the cell. This chain is UDP-3-O-acylglucosamine N-acyltransferase, found in Aeromonas hydrophila subsp. hydrophila (strain ATCC 7966 / DSM 30187 / BCRC 13018 / CCUG 14551 / JCM 1027 / KCTC 2358 / NCIMB 9240 / NCTC 8049).